The primary structure comprises 1082 residues: Carbamoyl phosphate synthase large chain (1082 aa).

Residues 1–401 are carboxyphosphate synthetic domain; that stretch reads MPKDKALKKV…ALLKAVRSLE (401 aa). ATP is bound by residues arginine 129, arginine 169, glycine 175, glycine 176, lysine 208, valine 210, glutamate 215, glycine 241, isoleucine 242, histidine 243, glutamine 284, and glutamate 298. Residues 133–327 form the ATP-grasp 1 domain; it reads KNMCLEIGEP…IAKVATKVAV (195 aa). Mg(2+) contacts are provided by glutamine 284, glutamate 298, and asparagine 300. Mn(2+) contacts are provided by glutamine 284, glutamate 298, and asparagine 300. Positions 402 to 561 are oligomerization domain; the sequence is TGVTGMNLPE…YSTYEDEDEA (160 aa). Residues 562-944 are carbamoyl phosphate synthetic domain; the sequence is EPQAVRKVVV…ALYKACLSAG (383 aa). One can recognise an ATP-grasp 2 domain in the interval 686 to 876; sequence DQLVAELGIP…MVNLATRICL (191 aa). ATP-binding residues include arginine 722, lysine 761, leucine 763, glutamate 767, glycine 792, isoleucine 793, histidine 794, serine 795, glutamine 835, and glutamate 847. Mg(2+) contacts are provided by glutamine 835, glutamate 847, and asparagine 849. Residues glutamine 835, glutamate 847, and asparagine 849 each contribute to the Mn(2+) site. Positions 945-1082 constitute an MGS-like domain; the sequence is YTLPSSGKAV…PLIPLQEYVS (138 aa). The segment at 945–1082 is allosteric domain; that stretch reads YTLPSSGKAV…PLIPLQEYVS (138 aa).

This sequence belongs to the CarB family. Composed of two chains; the small (or glutamine) chain promotes the hydrolysis of glutamine to ammonia, which is used by the large (or ammonia) chain to synthesize carbamoyl phosphate. Tetramer of heterodimers (alpha,beta)4. It depends on Mg(2+) as a cofactor. Requires Mn(2+) as cofactor.

It catalyses the reaction hydrogencarbonate + L-glutamine + 2 ATP + H2O = carbamoyl phosphate + L-glutamate + 2 ADP + phosphate + 2 H(+). The enzyme catalyses hydrogencarbonate + NH4(+) + 2 ATP = carbamoyl phosphate + 2 ADP + phosphate + 2 H(+). It participates in amino-acid biosynthesis; L-arginine biosynthesis; carbamoyl phosphate from bicarbonate: step 1/1. It functions in the pathway pyrimidine metabolism; UMP biosynthesis via de novo pathway; (S)-dihydroorotate from bicarbonate: step 1/3. Functionally, large subunit of the glutamine-dependent carbamoyl phosphate synthetase (CPSase). CPSase catalyzes the formation of carbamoyl phosphate from the ammonia moiety of glutamine, carbonate, and phosphate donated by ATP, constituting the first step of 2 biosynthetic pathways, one leading to arginine and/or urea and the other to pyrimidine nucleotides. The large subunit (synthetase) binds the substrates ammonia (free or transferred from glutamine from the small subunit), hydrogencarbonate and ATP and carries out an ATP-coupled ligase reaction, activating hydrogencarbonate by forming carboxy phosphate which reacts with ammonia to form carbamoyl phosphate. The chain is Carbamoyl phosphate synthase large chain from Desulforudis audaxviator (strain MP104C).